A 318-amino-acid polypeptide reads, in one-letter code: Transcription factor MYBS3 (318 aa).

Disordered regions lie at residues Met1 to Asn20 and Ala50 to Glu98. A CCHC-type zinc finger spans residues Arg3 to Asn20. Residues Cys8 to Cys18 show a composition bias toward polar residues. The segment covering Ala50–Asp77 has biased composition (low complexity). Positions Arg88 to Ser144 constitute an HTH myb-type domain. Positions Trp116–Phe140 form a DNA-binding region, H-T-H motif. A disordered region spans residues Val159–Asp200.

In terms of tissue distribution, expressed in all tissues, with the highest level in senescent leaves.

It is found in the nucleus. Transcription repressor that binds to 5'-TATCCA-3' elements in gene promoters. Contributes to the sugar-repressed transcription of promoters containing SRS or 5'-TATCCA-3' elements. Transcription repressor involved in a cold stress response pathway that confers cold tolerance. Suppresses the DREB1-dependent signaling pathway under prolonged cold stress. DREB1 responds quickly and transiently while MYBS3 responds slowly to cold stress. They may act sequentially and complementarily for adaptation to short- and long-term cold stress. This Oryza sativa subsp. japonica (Rice) protein is Transcription factor MYBS3.